Here is a 66-residue protein sequence, read N- to C-terminus: Large ribosomal subunit protein bL33c (66 aa).

This sequence belongs to the bacterial ribosomal protein bL33 family.

It localises to the plastid. The protein localises to the chloroplast. The sequence is that of Large ribosomal subunit protein bL33c from Cycas taitungensis (Prince sago).